The following is a 457-amino-acid chain: Argininosuccinate lyase (457 aa).

This sequence belongs to the lyase 1 family. Argininosuccinate lyase subfamily.

It localises to the cytoplasm. The catalysed reaction is 2-(N(omega)-L-arginino)succinate = fumarate + L-arginine. It functions in the pathway amino-acid biosynthesis; L-arginine biosynthesis; L-arginine from L-ornithine and carbamoyl phosphate: step 3/3. The sequence is that of Argininosuccinate lyase from Serratia proteamaculans (strain 568).